Reading from the N-terminus, the 274-residue chain is Putative bidirectional sugar transporter SWEET7d (274 aa).

Over 1 to 8 the chain is Extracellular; that stretch reads MVPDLIRN. Residues 9-29 traverse the membrane as a helical segment; it reads VVGIVGNVISFGLFLSPVPTF. One can recognise a MtN3/slv 1 domain in the interval 9 to 96; it reads VVGIVGNVIS…TIFFLFSDKK (88 aa). The Cytoplasmic segment spans residues 30 to 45; that stretch reads WRIIKNKDVRDFKADQ. Residues 46 to 66 traverse the membrane as a helical segment; it reads YLATLLNCMLWVFYGLPIVHP. Over 67–68 the chain is Extracellular; it reads NS. The chain crosses the membrane as a helical span at residues 69-89; it reads ILVVTINGIGLVIEAVYLTIF. Topologically, residues 90–100 are cytoplasmic; sequence FLFSDKKNKKK. The helical transmembrane segment at 101-121 threads the bilayer; the sequence is MGVVLATEALFMAAVALGVLL. Residues 122-130 lie on the Extracellular side of the membrane; sequence DAHTHQRRS. Residues 131-151 traverse the membrane as a helical segment; sequence LIVGILCVIFGTIMYSSPLTI. The region spanning 132 to 214 is the MtN3/slv 2 domain; that stretch reads IVGILCVIFG…QLILYAIYYR (83 aa). Residues 152–164 are Cytoplasmic-facing; it reads MSQVVKTKSVEYM. A helical transmembrane segment spans residues 165-185; it reads PLLLSVVSFLNGLCWTSYALI. At 186 to 188 the chain is on the extracellular side; sequence RFD. A helical transmembrane segment spans residues 189-209; that stretch reads IFITIPNGLGVLFALMQLILY. At 210 to 274 the chain is on the cytoplasmic side; the sequence is AIYYRTTPKK…SISRLSHKLA (65 aa). Residues 218-274 form a disordered region; sequence KKPSTTGPHPRSRIRTSSYQPSPPSPRAPASSPLSARTTTSMAAMSPSISRLSHKLA. The span at 245–258 shows a compositional bias: low complexity; it reads APASSPLSARTTTS.

It belongs to the SWEET sugar transporter family. As to quaternary structure, forms homooligomers and/or heterooligomers.

Its subcellular location is the cell membrane. Functionally, mediates both low-affinity uptake and efflux of sugar across the plasma membrane. The chain is Putative bidirectional sugar transporter SWEET7d (SWEET7D) from Oryza sativa subsp. japonica (Rice).